The sequence spans 186 residues: Potassium-transporting ATPase KdpC subunit (186 aa).

A helical membrane pass occupies residues 9-29; that stretch reads AAVVLFGGCLLVLGLLYPLAM.

It belongs to the KdpC family. As to quaternary structure, the system is composed of three essential subunits: KdpA, KdpB and KdpC.

The protein resides in the cell membrane. Functionally, part of the high-affinity ATP-driven potassium transport (or Kdp) system, which catalyzes the hydrolysis of ATP coupled with the electrogenic transport of potassium into the cytoplasm. This subunit acts as a catalytic chaperone that increases the ATP-binding affinity of the ATP-hydrolyzing subunit KdpB by the formation of a transient KdpB/KdpC/ATP ternary complex. This is Potassium-transporting ATPase KdpC subunit from Methanosphaerula palustris (strain ATCC BAA-1556 / DSM 19958 / E1-9c).